Here is a 703-residue protein sequence, read N- to C-terminus: Neoverrucotoxin subunit alpha (703 aa).

Residue Ser-2 is modified to N-acetylserine. The B30.2/SPRY domain occupies Pro-508–Leu-703.

The protein belongs to the SNTX/VTX toxin family. In terms of assembly, heterodimer of alpha and beta subunits. Post-translationally, not glycosylated. Four intrachain disulfide linkages are present in the heterodimer. No interchain disulfide bound links the two subunits. In terms of tissue distribution, expressed by the venom gland.

The protein resides in the secreted. Functionally, has hemolytic and lethal activities. Its hemolytic activity is inhibited by anionic lipids, especially potently by cardiolipin. The polypeptide is Neoverrucotoxin subunit alpha (Synanceia verrucosa (Reef stonefish)).